Here is a 207-residue protein sequence, read N- to C-terminus: dTTP/UTP pyrophosphatase (207 aa).

Asp-80 (proton acceptor) is an active-site residue.

Belongs to the Maf family. YhdE subfamily. It depends on a divalent metal cation as a cofactor.

The protein localises to the cytoplasm. The enzyme catalyses dTTP + H2O = dTMP + diphosphate + H(+). It carries out the reaction UTP + H2O = UMP + diphosphate + H(+). Nucleoside triphosphate pyrophosphatase that hydrolyzes dTTP and UTP. May have a dual role in cell division arrest and in preventing the incorporation of modified nucleotides into cellular nucleic acids. The protein is dTTP/UTP pyrophosphatase (maf1) of Agrobacterium fabrum (strain C58 / ATCC 33970) (Agrobacterium tumefaciens (strain C58)).